The following is a 236-amino-acid chain: MIVQLDPASISFPPAATALHEPNGLLAVGGDLSPGRLIHAYQQGIFPWFSESDPILWWSPNPRAVFFPDQIHTSRSLAKTNRKPNWQMSINCNFAEVVRACADERADKEGTWITEEMIEAYCKLHQLGYAHSVEIWFDNELAGGLYGISVGRAFCGESMFHYKTDASKIALLRFAQYFKKHGGQLIDCQVGNPHLFSLGAVNLHRERFLMKLNIAQQKKMPDTFWQARELPLPGEL.

Belongs to the L/F-transferase family.

Its subcellular location is the cytoplasm. It carries out the reaction N-terminal L-lysyl-[protein] + L-leucyl-tRNA(Leu) = N-terminal L-leucyl-L-lysyl-[protein] + tRNA(Leu) + H(+). The enzyme catalyses N-terminal L-arginyl-[protein] + L-leucyl-tRNA(Leu) = N-terminal L-leucyl-L-arginyl-[protein] + tRNA(Leu) + H(+). The catalysed reaction is L-phenylalanyl-tRNA(Phe) + an N-terminal L-alpha-aminoacyl-[protein] = an N-terminal L-phenylalanyl-L-alpha-aminoacyl-[protein] + tRNA(Phe). Functions in the N-end rule pathway of protein degradation where it conjugates Leu, Phe and, less efficiently, Met from aminoacyl-tRNAs to the N-termini of proteins containing an N-terminal arginine or lysine. The protein is Leucyl/phenylalanyl-tRNA--protein transferase of Idiomarina loihiensis (strain ATCC BAA-735 / DSM 15497 / L2-TR).